The sequence spans 380 residues: 3-dehydroquinate synthase (380 aa).

Belongs to the archaeal-type DHQ synthase family.

The enzyme catalyses 2-amino-2,3,7-trideoxy-D-lyxo-hept-6-ulosonate + NAD(+) + H2O = 3-dehydroquinate + NH4(+) + NADH + H(+). Its function is as follows. Catalyzes the oxidative deamination and cyclization of 2-amino-3,7-dideoxy-D-threo-hept-6-ulosonic acid (ADH) to yield 3-dehydroquinate (DHQ), which is fed into the canonical shikimic pathway of aromatic amino acid biosynthesis. This is 3-dehydroquinate synthase from Methanosarcina acetivorans (strain ATCC 35395 / DSM 2834 / JCM 12185 / C2A).